The chain runs to 560 residues: Oxygen-dependent choline dehydrogenase 1 (560 aa).

An FAD-binding site is contributed by 8–37 (DYIIIGAGSAGNVLATRLTEDPDVQVLLLE). His-475 serves as the catalytic Proton acceptor.

This sequence belongs to the GMC oxidoreductase family. The cofactor is FAD.

The enzyme catalyses choline + A = betaine aldehyde + AH2. It carries out the reaction betaine aldehyde + NAD(+) + H2O = glycine betaine + NADH + 2 H(+). It functions in the pathway amine and polyamine biosynthesis; betaine biosynthesis via choline pathway; betaine aldehyde from choline (cytochrome c reductase route): step 1/1. Its function is as follows. Involved in the biosynthesis of the osmoprotectant glycine betaine. Catalyzes the oxidation of choline to betaine aldehyde and betaine aldehyde to glycine betaine at the same rate. This Chromohalobacter salexigens (strain ATCC BAA-138 / DSM 3043 / CIP 106854 / NCIMB 13768 / 1H11) protein is Oxygen-dependent choline dehydrogenase 1.